The chain runs to 453 residues: Serine/threonine-protein phosphatase 2A regulatory subunit B'' subunit gamma (453 aa).

EF-hand domains follow at residues 273 to 308 (PSALRVYGQYLNLDKDHNGMLSKEELSRYGTATMTN) and 341 to 376 (KEPAALQYIFKLLDIENKGYLNVFSLNYFFRAIQEL). Ca(2+) contacts are provided by Asp-286, Asp-288, Asn-290, Met-292, and Glu-297.

Interacts with MCM3AP/GANP, PPP5C, and the phosphatase 2A core enzyme composed of the PPP2CA catalytic subunit and the constant regulatory subunit PPP2R1A. Finds in a complex with ABCB1, TFPI2 and PPP2R3C; leading to the dephosphorylation of ABCB1.

The protein resides in the nucleus. The protein localises to the cytoplasm. Its function is as follows. May regulate MCM3AP phosphorylation through phosphatase recruitment. May act as a negative regulator of ABCB1 expression and function through the dephosphorylation of ABCB1 by TFPI2/PPP2R3C complex. May play a role in the activation-induced cell death of B-cells. This Bos taurus (Bovine) protein is Serine/threonine-protein phosphatase 2A regulatory subunit B'' subunit gamma (PPP2R3C).